Here is a 435-residue protein sequence, read N- to C-terminus: Ribosomal protein uS12 methylthiotransferase RimO (435 aa).

Residues 3–113 enclose the MTTase N-terminal domain; that stretch reads HKVGFVSLGC…VVNAVHQYLP (111 aa). The [4Fe-4S] cluster site is built by cysteine 12, cysteine 48, cysteine 77, cysteine 144, cysteine 148, and cysteine 151. A Radical SAM core domain is found at 130-367; that stretch reads LTPRHYAYLK…MQVQAEISRN (238 aa). Residues 370-435 form the TRAM domain; that stretch reads KNKIGSTQTV…DDYDLYASLV (66 aa).

This sequence belongs to the methylthiotransferase family. RimO subfamily. [4Fe-4S] cluster is required as a cofactor.

Its subcellular location is the cytoplasm. It carries out the reaction L-aspartate(89)-[ribosomal protein uS12]-hydrogen + (sulfur carrier)-SH + AH2 + 2 S-adenosyl-L-methionine = 3-methylsulfanyl-L-aspartate(89)-[ribosomal protein uS12]-hydrogen + (sulfur carrier)-H + 5'-deoxyadenosine + L-methionine + A + S-adenosyl-L-homocysteine + 2 H(+). Functionally, catalyzes the methylthiolation of an aspartic acid residue of ribosomal protein uS12. In Legionella pneumophila subsp. pneumophila (strain Philadelphia 1 / ATCC 33152 / DSM 7513), this protein is Ribosomal protein uS12 methylthiotransferase RimO.